Reading from the N-terminus, the 558-residue chain is Dihydroxy-acid dehydratase (558 aa).

[2Fe-2S] cluster is bound at residue cysteine 50. Aspartate 82 is a binding site for Mg(2+). A [2Fe-2S] cluster-binding site is contributed by cysteine 123. 2 residues coordinate Mg(2+): aspartate 124 and lysine 125. Lysine 125 is modified (N6-carboxylysine). Cysteine 195 is a binding site for [2Fe-2S] cluster. Glutamate 447 is a Mg(2+) binding site. The active-site Proton acceptor is the serine 472.

The protein belongs to the IlvD/Edd family. In terms of assembly, homodimer. It depends on [2Fe-2S] cluster as a cofactor. Requires Mg(2+) as cofactor.

The catalysed reaction is (2R)-2,3-dihydroxy-3-methylbutanoate = 3-methyl-2-oxobutanoate + H2O. The enzyme catalyses (2R,3R)-2,3-dihydroxy-3-methylpentanoate = (S)-3-methyl-2-oxopentanoate + H2O. The protein operates within amino-acid biosynthesis; L-isoleucine biosynthesis; L-isoleucine from 2-oxobutanoate: step 3/4. Its pathway is amino-acid biosynthesis; L-valine biosynthesis; L-valine from pyruvate: step 3/4. Functions in the biosynthesis of branched-chain amino acids. Catalyzes the dehydration of (2R,3R)-2,3-dihydroxy-3-methylpentanoate (2,3-dihydroxy-3-methylvalerate) into 2-oxo-3-methylpentanoate (2-oxo-3-methylvalerate) and of (2R)-2,3-dihydroxy-3-methylbutanoate (2,3-dihydroxyisovalerate) into 2-oxo-3-methylbutanoate (2-oxoisovalerate), the penultimate precursor to L-isoleucine and L-valine, respectively. The chain is Dihydroxy-acid dehydratase from Saccharolobus islandicus (strain L.S.2.15 / Lassen #1) (Sulfolobus islandicus).